A 475-amino-acid chain; its full sequence is Ribulose bisphosphate carboxylase large chain (475 aa).

The propeptide occupies 1–2 (MS). Pro-3 is subject to N-acetylproline. Lys-14 carries the N6,N6,N6-trimethyllysine modification. The substrate site is built by Asn-123 and Thr-173. The active-site Proton acceptor is the Lys-175. Residue Lys-177 coordinates substrate. Mg(2+) contacts are provided by Lys-201, Asp-203, and Glu-204. Lys-201 bears the N6-carboxylysine mark. The active-site Proton acceptor is the His-294. 3 residues coordinate substrate: Arg-295, His-327, and Ser-379.

It belongs to the RuBisCO large chain family. Type I subfamily. In terms of assembly, heterohexadecamer of 8 large chains and 8 small chains; disulfide-linked. The disulfide link is formed within the large subunit homodimers. Mg(2+) serves as cofactor. In terms of processing, the disulfide bond which can form in the large chain dimeric partners within the hexadecamer appears to be associated with oxidative stress and protein turnover.

Its subcellular location is the plastid. The protein localises to the chloroplast. It catalyses the reaction 2 (2R)-3-phosphoglycerate + 2 H(+) = D-ribulose 1,5-bisphosphate + CO2 + H2O. The catalysed reaction is D-ribulose 1,5-bisphosphate + O2 = 2-phosphoglycolate + (2R)-3-phosphoglycerate + 2 H(+). RuBisCO catalyzes two reactions: the carboxylation of D-ribulose 1,5-bisphosphate, the primary event in carbon dioxide fixation, as well as the oxidative fragmentation of the pentose substrate in the photorespiration process. Both reactions occur simultaneously and in competition at the same active site. In Quercus rubra (Northern red oak), this protein is Ribulose bisphosphate carboxylase large chain.